Here is a 193-residue protein sequence, read N- to C-terminus: Epididymal-specific lipocalin-12 (193 aa).

The first 19 residues, 1-19 (MGPWWALWLILTLPQILGG), serve as a signal peptide directing secretion. An intrachain disulfide couples Cys-88 to Cys-193. Residues Asn-143 and Asn-172 are each glycosylated (N-linked (GlcNAc...) asparagine).

It belongs to the calycin superfamily. Lipocalin family. As to quaternary structure, monomer.

It localises to the secreted. Its function is as follows. Binds all-trans retinoic acid and may act as a retinoid carrier protein within the epididymis. May play a role in male fertility. The chain is Epididymal-specific lipocalin-12 (Lcn12) from Rattus norvegicus (Rat).